Consider the following 120-residue polypeptide: Chaperonin GroEL (120 aa).

Position 23–27 (23–27 (DGTTT)) interacts with ATP.

This sequence belongs to the chaperonin (HSP60) family. In terms of assembly, forms a cylinder of 14 subunits composed of two heptameric rings stacked back-to-back. Interacts with the co-chaperonin GroES.

Its subcellular location is the cytoplasm. The catalysed reaction is ATP + H2O + a folded polypeptide = ADP + phosphate + an unfolded polypeptide.. Functionally, together with its co-chaperonin GroES, plays an essential role in assisting protein folding. The GroEL-GroES system forms a nano-cage that allows encapsulation of the non-native substrate proteins and provides a physical environment optimized to promote and accelerate protein folding. This chain is Chaperonin GroEL, found in Mycobacterium shimoidei.